The following is a 335-amino-acid chain: Olfactory receptor 10R2 (335 aa).

Residues 1 to 45 (MPQILIFTYLNMFYFFPPLQILAENLTMVTEFLLLGFSSLGEIQL) are Extracellular-facing. Asparagine 25 carries an N-linked (GlcNAc...) asparagine glycan. Residues 46–66 (ALFVVFLFLYLVILSGNVTII) form a helical membrane-spanning segment. Over 67-74 (SVIHLDKS) the chain is Cytoplasmic. The chain crosses the membrane as a helical span at residues 75–95 (LHTPMYFFLGILSTSETFYTF). The Extracellular segment spans residues 96–119 (VILPKMLINLLSVARTISFNCCAL). Cysteines 117 and 209 form a disulfide. A helical membrane pass occupies residues 120-140 (QMFFFLGFAITNCLLLGVMGY). Over 141 to 159 (DRYAAICHPLHYPTLMSWQ) the chain is Cytoplasmic. Residues 160–180 (VCGKLAAACAIGGFLASLTVV) traverse the membrane as a helical segment. Over 181-217 (NLVFSLPFCSANKVNHYFCDISAVILLACTNTDVNEF) the chain is Extracellular. The chain crosses the membrane as a helical span at residues 218-237 (VIFICGVLVLVVPFLFICVS). Residues 238–257 (YLCILRTILKIPSAEGRRKA) are Cytoplasmic-facing. Residues 258-278 (FSTCASHLSVVIVHYGCASFI) traverse the membrane as a helical segment. Over 279–291 (YLRPTANYVSNKD) the chain is Extracellular. Residues 292–312 (RLVTVTYTIVTPLLNPMVYSL) traverse the membrane as a helical segment. The Cytoplasmic segment spans residues 313 to 335 (RNKDVQLAIRKVLGKKGSLKLYN).

This sequence belongs to the G-protein coupled receptor 1 family.

The protein localises to the cell membrane. Odorant receptor. The chain is Olfactory receptor 10R2 (OR10R2) from Homo sapiens (Human).